The chain runs to 425 residues: UDP-N-acetylglucosamine 1-carboxyvinyltransferase (425 aa).

A phosphoenolpyruvate-binding site is contributed by 25 to 26 (KN). Arginine 95 contacts UDP-N-acetyl-alpha-D-glucosamine. The active-site Proton donor is the cysteine 119. 2-(S-cysteinyl)pyruvic acid O-phosphothioketal is present on cysteine 119. Residues 124–128 (RPVDQ), aspartate 306, and isoleucine 328 contribute to the UDP-N-acetyl-alpha-D-glucosamine site.

This sequence belongs to the EPSP synthase family. MurA subfamily.

It is found in the cytoplasm. It catalyses the reaction phosphoenolpyruvate + UDP-N-acetyl-alpha-D-glucosamine = UDP-N-acetyl-3-O-(1-carboxyvinyl)-alpha-D-glucosamine + phosphate. It functions in the pathway cell wall biogenesis; peptidoglycan biosynthesis. Cell wall formation. Adds enolpyruvyl to UDP-N-acetylglucosamine. This Thermus thermophilus (strain ATCC BAA-163 / DSM 7039 / HB27) protein is UDP-N-acetylglucosamine 1-carboxyvinyltransferase.